Reading from the N-terminus, the 245-residue chain is 5-oxoprolinase subunit A (245 aa).

This sequence belongs to the LamB/PxpA family. As to quaternary structure, forms a complex composed of PxpA, PxpB and PxpC.

It carries out the reaction 5-oxo-L-proline + ATP + 2 H2O = L-glutamate + ADP + phosphate + H(+). Functionally, catalyzes the cleavage of 5-oxoproline to form L-glutamate coupled to the hydrolysis of ATP to ADP and inorganic phosphate. This chain is 5-oxoprolinase subunit A, found in Neisseria meningitidis serogroup C (strain 053442).